The primary structure comprises 366 residues: Proline-rich protein 19 (366 aa).

Disordered stretches follow at residues Met-1–Cys-53, Glu-102–Val-149, Thr-256–Gly-286, and Ala-301–Asn-338. Over residues Gly-18 to Arg-29 the composition is skewed to basic residues. Polar residues-rich tracts occupy residues His-104–Ser-113 and Thr-256–Gln-265. Residues Ser-275 to Gly-286 show a composition bias toward low complexity. The span at Thr-302–Leu-326 shows a compositional bias: pro residues.

As to quaternary structure, interacts with CNTD1. In terms of tissue distribution, preferentially expressed in gonads.

It is found in the nucleus. The protein localises to the chromosome. In terms of biological role, promotes meiotic crossing over formation through its interaction with CNTD1 by participating in the crossover differentiation step of crossover-specific recombination intermediates. This chain is Proline-rich protein 19, found in Mus musculus (Mouse).